Here is a 106-residue protein sequence, read N- to C-terminus: Large ribosomal subunit protein uL24 (106 aa).

It belongs to the universal ribosomal protein uL24 family. In terms of assembly, part of the 50S ribosomal subunit.

Its function is as follows. One of two assembly initiator proteins, it binds directly to the 5'-end of the 23S rRNA, where it nucleates assembly of the 50S subunit. Functionally, one of the proteins that surrounds the polypeptide exit tunnel on the outside of the subunit. This Delftia acidovorans (strain DSM 14801 / SPH-1) protein is Large ribosomal subunit protein uL24.